A 352-amino-acid polypeptide reads, in one-letter code: Ribosomal lysine N-methyltransferase 5 (352 aa).

S-adenosyl-L-methionine is bound by residues Trp107, 161–163 (GSG), Asp183, Trp244, and Leu274.

It belongs to the class I-like SAM-binding methyltransferase superfamily. RKM5 family.

S-adenosyl-L-methionine-dependent protein-lysine N-methyltransferase that methylates 60S ribosomal protein L1. The chain is Ribosomal lysine N-methyltransferase 5 (RKM5) from Candida glabrata (strain ATCC 2001 / BCRC 20586 / JCM 3761 / NBRC 0622 / NRRL Y-65 / CBS 138) (Yeast).